The chain runs to 151 residues: Large ribosomal subunit protein bL9 (151 aa).

This sequence belongs to the bacterial ribosomal protein bL9 family.

Its function is as follows. Binds to the 23S rRNA. The polypeptide is Large ribosomal subunit protein bL9 (Dehalococcoides mccartyi (strain ATCC BAA-2100 / JCM 16839 / KCTC 5957 / BAV1)).